The primary structure comprises 110 residues: Large ribosomal subunit protein bL20 (110 aa).

It belongs to the bacterial ribosomal protein bL20 family.

Binds directly to 23S ribosomal RNA and is necessary for the in vitro assembly process of the 50S ribosomal subunit. It is not involved in the protein synthesizing functions of that subunit. The chain is Large ribosomal subunit protein bL20 from Shigella boydii serotype 4 (strain Sb227).